Consider the following 270-residue polypeptide: 4-hydroxy-tetrahydrodipicolinate reductase (270 aa).

NAD(+) contacts are provided by residues G11–M16 and E37. R38 lines the NADP(+) pocket. NAD(+) contacts are provided by residues G101–T103 and A125–M128. H158 serves as the catalytic Proton donor/acceptor. Residue H159 coordinates (S)-2,3,4,5-tetrahydrodipicolinate. K162 functions as the Proton donor in the catalytic mechanism. Residue G168–T169 coordinates (S)-2,3,4,5-tetrahydrodipicolinate.

The protein belongs to the DapB family.

The protein resides in the cytoplasm. The enzyme catalyses (S)-2,3,4,5-tetrahydrodipicolinate + NAD(+) + H2O = (2S,4S)-4-hydroxy-2,3,4,5-tetrahydrodipicolinate + NADH + H(+). The catalysed reaction is (S)-2,3,4,5-tetrahydrodipicolinate + NADP(+) + H2O = (2S,4S)-4-hydroxy-2,3,4,5-tetrahydrodipicolinate + NADPH + H(+). Its pathway is amino-acid biosynthesis; L-lysine biosynthesis via DAP pathway; (S)-tetrahydrodipicolinate from L-aspartate: step 4/4. Functionally, catalyzes the conversion of 4-hydroxy-tetrahydrodipicolinate (HTPA) to tetrahydrodipicolinate. The protein is 4-hydroxy-tetrahydrodipicolinate reductase of Shewanella sp. (strain W3-18-1).